A 466-amino-acid chain; its full sequence is Ribulose bisphosphate carboxylase large chain (466 aa).

N6,N6,N6-trimethyllysine is present on Lys5. Substrate contacts are provided by Asn114 and Thr164. Lys166 acts as the Proton acceptor in catalysis. Lys168 provides a ligand contact to substrate. Residues Lys192, Asp194, and Glu195 each contribute to the Mg(2+) site. Lys192 carries the N6-carboxylysine modification. The active-site Proton acceptor is the His285. Substrate-binding residues include Arg286, His318, and Ser370.

It belongs to the RuBisCO large chain family. Type I subfamily. Heterohexadecamer of 8 large chains and 8 small chains; disulfide-linked. The disulfide link is formed within the large subunit homodimers. The cofactor is Mg(2+). In terms of processing, the disulfide bond which can form in the large chain dimeric partners within the hexadecamer appears to be associated with oxidative stress and protein turnover.

The protein resides in the plastid. It localises to the chloroplast. It catalyses the reaction 2 (2R)-3-phosphoglycerate + 2 H(+) = D-ribulose 1,5-bisphosphate + CO2 + H2O. The enzyme catalyses D-ribulose 1,5-bisphosphate + O2 = 2-phosphoglycolate + (2R)-3-phosphoglycerate + 2 H(+). In terms of biological role, ruBisCO catalyzes two reactions: the carboxylation of D-ribulose 1,5-bisphosphate, the primary event in carbon dioxide fixation, as well as the oxidative fragmentation of the pentose substrate in the photorespiration process. Both reactions occur simultaneously and in competition at the same active site. The sequence is that of Ribulose bisphosphate carboxylase large chain from Oxalis dillenii (Gray-green wood sorrel).